The sequence spans 299 residues: Triplex capsid protein 1 (299 aa).

The protein belongs to the herpesviridae TRX1 protein family. In terms of assembly, interacts with TRX2, MCP and capsid vertex component 2/CVC2.

It is found in the virion. It localises to the host nucleus. Structural component of the T=16 icosahedral capsid. The capsid is composed of pentamers and hexamers of major capsid protein/MCP, which are linked together by heterotrimers called triplexes. These triplexes are formed by a single molecule of triplex protein 1/TRX1 and two copies of triplex protein 2/TRX2. Additionally, TRX1 is required for efficient transport of TRX2 to the nucleus, which is the site of capsid assembly. This is Triplex capsid protein 1 from Homo sapiens (Human).